Here is a 1642-residue protein sequence, read N- to C-terminus: Cholesterol transporter ABCA5 (1642 aa).

A helical membrane pass occupies residues 32–52 (SVQEILFPLFFLFWLILISMM). Asparagine 86 and asparagine 190 each carry an N-linked (GlcNAc...) asparagine glycan. The next 6 membrane-spanning stretches (helical) occupy residues 220-240 (VILIYLVIAFSPFGYFLAIHI), 264-284 (LSWVLLYTSLIFLMSLLMAVI), 297-317 (IVIFLLFFLYGLSSVFFALML), 327-347 (VGVVEFFVTVVFGFVGLLIVL), 355-375 (LVWLFSPLCQCAFLIGIAQVM), and 396-416 (LIITLTMLALDSVFYALLAVY). The N-linked (GlcNAc...) asparagine glycan is linked to asparagine 458. Residues 478-713 (IRISGIQKAY…WGIGYRLSMY (236 aa)) enclose the ABC transporter 1 domain. 514-521 (GHSGTGKS) contributes to the ATP binding site. Residues 866-886 (LLLLLIFFAVQIFMFLVHHSF) traverse the membrane as a helical segment. Asparagine 919 carries N-linked (GlcNAc...) asparagine glycosylation. Residues 967-987 (VFTAVFNSTMVYSLPVMMNII) form a helical membrane-spanning segment. The N-linked (GlcNAc...) asparagine glycan is linked to asparagine 996. 6 helical membrane-spanning segments follow: residues 1021 to 1041 (LYFQAALLGIIVTAMPPYFAM), 1071 to 1091 (VVDIPLFFVVLTLMLGSLFAF), 1102 to 1122 (FLAVVFCLIAYVPSVILFTYI), 1139 to 1159 (FIYSVTALACVAVTEITFFLG), 1164 to 1184 (AVFHYTFCIAIPIYPLLGCLI), and 1207 to 1227 (LLVAVIMPYLQCVLWIFLLQH). The region spanning 1290–1533 (IMVYNLHKEY…FGKGYFLEIK (244 aa)) is the ABC transporter 2 domain. 1333 to 1340 (GPNGAGKS) lines the ATP pocket.

The protein belongs to the ABC transporter superfamily. ABCA family. N-glycosylated. Expressed in testis, epididymis, lung and brain.

The protein resides in the lysosome membrane. It localises to the late endosome membrane. It is found in the golgi apparatus membrane. The protein localises to the cell membrane. The catalysed reaction is cholesterol(in) + ATP + H2O = cholesterol(out) + ADP + phosphate + H(+). Functionally, cholesterol efflux transporter in macrophages that is responsible for APOAI/high-density lipoproteins (HDL) formation at the plasma membrane under high cholesterol levels and participates in reverse cholesterol transport. May play a role in the processing of autolysosomes. The polypeptide is Cholesterol transporter ABCA5 (Rattus norvegicus (Rat)).